A 454-amino-acid polypeptide reads, in one-letter code: MQLKIKEIFNQDYVKLEGQKIQIKAWVRSNRDSKKIGFLVLNDGSSLTNLQAVYRVDKIDNYEEIAAARMWAAVVIEGVIKLTPTAKQPLELEVLNAQILKQSDEDFLLSNNDLNLETLRLNAHLRPRTNLFHAIMKVRATLAFAVHEFMNQNEYSWLAAPLFTGNDAEGAGETFSIQKFDNEEFFGKQTHLSVTGQLQAEAYAQAFGNVYTFGPTFRAEKSHTNRHLAEFWMIEPEMAFVDLKGMQDIVEDLVKHVIKAVLEKNQQELEFLAQRNDENLIKKLQKVVESKFERIEYKDAVKILADAVKNGHQFENNEIFFGMDLGSEHERYMCETYHQGPVFLQNYPKDIKAFYMKLNDDQQTVASTDLLIPGVGELVGGSQREDSYEKLLKRCQELKMPIESLQWYLDLRRFGYYMSSGFGIGFERLVMYVTGVNNIKDTIPFPRSHGQIEF.

It belongs to the class-II aminoacyl-tRNA synthetase family. As to quaternary structure, homodimer.

The protein localises to the cytoplasm. It carries out the reaction tRNA(Asn) + L-asparagine + ATP = L-asparaginyl-tRNA(Asn) + AMP + diphosphate + H(+). The protein is Asparagine--tRNA ligase of Ureaplasma parvum serovar 3 (strain ATCC 27815 / 27 / NCTC 11736).